Here is a 202-residue protein sequence, read N- to C-terminus: Imidazole glycerol phosphate synthase subunit HisH (202 aa).

A Glutamine amidotransferase type-1 domain is found at 3 to 202 (RIVIIDYGLG…KILKNFVEMC (200 aa)). Residue cysteine 79 is the Nucleophile of the active site. Catalysis depends on residues histidine 183 and glutamate 185.

As to quaternary structure, heterodimer of HisH and HisF.

It localises to the cytoplasm. The catalysed reaction is 5-[(5-phospho-1-deoxy-D-ribulos-1-ylimino)methylamino]-1-(5-phospho-beta-D-ribosyl)imidazole-4-carboxamide + L-glutamine = D-erythro-1-(imidazol-4-yl)glycerol 3-phosphate + 5-amino-1-(5-phospho-beta-D-ribosyl)imidazole-4-carboxamide + L-glutamate + H(+). The enzyme catalyses L-glutamine + H2O = L-glutamate + NH4(+). Its pathway is amino-acid biosynthesis; L-histidine biosynthesis; L-histidine from 5-phospho-alpha-D-ribose 1-diphosphate: step 5/9. IGPS catalyzes the conversion of PRFAR and glutamine to IGP, AICAR and glutamate. The HisH subunit catalyzes the hydrolysis of glutamine to glutamate and ammonia as part of the synthesis of IGP and AICAR. The resulting ammonia molecule is channeled to the active site of HisF. In Methanosarcina acetivorans (strain ATCC 35395 / DSM 2834 / JCM 12185 / C2A), this protein is Imidazole glycerol phosphate synthase subunit HisH.